The primary structure comprises 344 residues: MMMFKSGDMDYTQKMKRCHEYVEALEEEQKKIQVFQRELPLCLELVTQAIESCRKELSESSEHVGGQSECSERTTSECGGAVFEEFMPIKWSSASSDETDKDEEAEKTEMMTNENNDGDKKKSDWLRSVQLWNQSPDPQPNNKKPMVIEVKRSAGAFQPFQKEKPKAADSQPLIKAITPTSTTTTSSTAETVGGGKEFEEQKQSHSNRKQRRCWSPELHRRFLHALQQLGGSHVATPKQIRDLMKVDGLTNDEVKSHLQKYRLHTRRPATPVVRTGGENPQQRQFMVMEGIWVPSHDTTNNRVYAPVATQPPQSSTSGERSNRGCKSPATSSTTTHTPHLLPLS.

Disordered regions lie at residues 90–122 (KWSSASSDETDKDEEAEKTEMMTNENNDGDKKK) and 156–212 (AFQP…KQRR). Over residues 97–106 (DETDKDEEAE) the composition is skewed to acidic residues. Low complexity predominate over residues 178–188 (TPTSTTTTSST). The HTH myb-type domain occupies 206–266 (SNRKQRRCWS…HLQKYRLHTR (61 aa)). The segment at residues 237–262 (PKQIRDLMKVDGLTNDEVKSHLQKYR) is a DNA-binding region (H-T-H motif). A disordered region spans residues 306–344 (PVATQPPQSSTSGERSNRGCKSPATSSTTTHTPHLLPLS). Over residues 310–319 (QPPQSSTSGE) the composition is skewed to polar residues. Positions 330–344 (TSSTTTHTPHLLPLS) are enriched in low complexity.

It is found in the nucleus. Probable transcription factor involved in phosphate signaling in roots. This Arabidopsis thaliana (Mouse-ear cress) protein is Transcription factor HHO3.